Here is a 728-residue protein sequence, read N- to C-terminus: FAS1 domain-containing protein fsc1 (728 aa).

The N-terminal stretch at 1 to 21 (MNLQFRLYLLFILLFISFANG) is a signal peptide. Over 22–670 (KNEYEDKSTS…TKRQNRWRIT (649 aa)) the chain is Vacuolar. 2 consecutive FAS1 domains span residues 29 to 151 (STSI…DNII) and 154 to 285 (PPPA…SSLI). N-linked (GlcNAc...) asparagine glycosylation is present at asparagine 89. N-linked (GlcNAc...) asparagine glycosylation is found at asparagine 404 and asparagine 501. A helical transmembrane segment spans residues 671 to 691 (FISISGLLLSVGICVLCYKIY). At 692–728 (FKFFRNRFMNQGEREPLLAPADSDTMAGRRNSSSLSV) the chain is on the cytoplasmic side.

It localises to the vacuole membrane. In terms of biological role, required for the fusion of autophagosomes with the vacuole. The chain is FAS1 domain-containing protein fsc1 (fsc1) from Schizosaccharomyces pombe (strain 972 / ATCC 24843) (Fission yeast).